The following is a 112-amino-acid chain: Osmotically-inducible putative lipoprotein OsmE (112 aa).

An N-terminal signal peptide occupies residues 1–20 (MNKNMAGILSAAAVLTMLAG). The N-palmitoyl cysteine moiety is linked to residue Cys-21. Cys-21 carries the S-diacylglycerol cysteine lipid modification.

The protein resides in the cell inner membrane. The chain is Osmotically-inducible putative lipoprotein OsmE (osmE) from Escherichia coli O157:H7.